We begin with the raw amino-acid sequence, 1344 residues long: Myb-binding protein 1A (1344 aa).

The segment at 1 to 24 (MAEMKSPTKAEPASPAEAPQGDRR) is disordered. The residue at position 2 (alanine 2) is an N-acetylalanine. The interaction with MYB stretch occupies residues 2–580 (AEMKSPTKAE…WDQMMSTLKE (579 aa)). Serine 14 is modified (phosphoserine). N6-acetyllysine is present on residues lysine 69 and lysine 156. 2 short sequence motifs (nuclear export signal) span residues 238–256 (SEDN…ANSV) and 261–279 (KLPD…ENKF). 2 disordered regions span residues 696–752 (NEDE…DVDP) and 1150–1344 (PKSE…VQTP). Residues 708–730 (TDEKQLKHGEDADSDSEDSKNSE) show a composition bias toward basic and acidic residues. Acidic residues predominate over residues 731-746 (SDVDSEDGEESEEEDR). Positions 1150–1161 (PKSEKKNVKDIP) are enriched in basic and acidic residues. A Glycyl lysine isopeptide (Lys-Gly) (interchain with G-Cter in SUMO2) cross-link involves residue lysine 1151. The tract at residues 1154 to 1344 (KKNVKDIPSD…RVARRRVQTP (191 aa)) is required for nuclear and nucleolar localization. A phosphoserine mark is found at serine 1162 and serine 1166. Basic residues predominate over residues 1170–1187 (TKRKKKGFLPETKKRKKL). Residue serine 1189 is modified to Phosphoserine. A Phosphothreonine modification is found at threonine 1193. A phosphoserine mark is found at serine 1221 and serine 1246. A compositionally biased stretch (low complexity) spans 1247 to 1256 (PAPNNPTLSP). Threonine 1253 carries the post-translational modification Phosphothreonine. Serine 1255 carries the phosphoserine modification. 2 positions are modified to phosphothreonine: threonine 1258 and threonine 1280. 3 positions are modified to phosphoserine: serine 1283, serine 1305, and serine 1318. A compositionally biased stretch (basic residues) spans 1301–1316 (VKRRSSQSALPKKRAR). Low complexity predominate over residues 1317–1329 (LSLVSRSPSLLQS). The residue at position 1322 (arginine 1322) is a Citrulline. Residues serine 1323, serine 1325, and serine 1329 each carry the phosphoserine modification. The span at 1331–1344 (IRKRRVARRRVQTP) shows a compositional bias: basic residues.

This sequence belongs to the MYBBP1A family. As to quaternary structure, binds to and represses JUN and MYB via the leucine zipper regions present in these proteins. Also binds to and represses PPARGC1A: this interaction is abrogated when PPARGC1A is phosphorylated by MAPK1/ERK. Binds to and stimulates transcription by AHR. Binds to KPNA2. Component of the B-WICH complex, at least composed of SMARCA5/SNF2H, BAZ1B/WSTF, SF3B1, DEK, MYO1C, ERCC6, MYBBP1A and DDX21. Interacts with CLOCK and CRY1. Post-translationally, citrullinated by PADI4.

It is found in the nucleus. It localises to the nucleolus. The protein localises to the cytoplasm. Its function is as follows. May activate or repress transcription via interactions with sequence specific DNA-binding proteins. Repression may be mediated at least in part by histone deacetylase activity (HDAC activity). Acts as a corepressor and in concert with CRY1, represses the transcription of the core circadian clock component PER2. Preferentially binds to dimethylated histone H3 'Lys-9' (H3K9me2) on the PER2 promoter. Has a role in rRNA biogenesis together with PWP1. This Rattus norvegicus (Rat) protein is Myb-binding protein 1A (Mybbp1a).